A 130-amino-acid polypeptide reads, in one-letter code: MAENQYYGTGRRKSSAARVFIKPGSGKIVINQRSLEQYFGRETARMVVRQPLELVDMVEKLDLYITVKGGGISGQAGAIRHGITRALMEYDETLRSELRKAGFVTRDARQVERKKVGLRKARRRPQFSKR.

This sequence belongs to the universal ribosomal protein uS9 family.

This Edwardsiella ictaluri (strain 93-146) protein is Small ribosomal subunit protein uS9.